The chain runs to 278 residues: Type II restriction enzyme NgoPII (278 aa).

The protein belongs to the NgoPII type II restriction endonuclease family.

The catalysed reaction is Endonucleolytic cleavage of DNA to give specific double-stranded fragments with terminal 5'-phosphates.. In terms of biological role, a P subtype restriction enzyme that recognizes the double-stranded sequence 5'-GGCC-3' and cleaves after G-2. The polypeptide is Type II restriction enzyme NgoPII (ngoPIIR) (Neisseria gonorrhoeae).